A 345-amino-acid polypeptide reads, in one-letter code: MQLSDFSFELPDELIARYPLETRSASRLLHLDAKGQYHDHMFTDIIDLFEEGDLLVLNDTKVMKARLKGKRATGGAIEILVERMLNHTTAYCHIKASNSPKAGAELFVGADNIPVIVRGRHENLFVVEFSQPILPVLEQYGQLPIPPYFNREAEEIDTERYQTVFHNPEKIASVAAPTASLHFDEELLAKLDQKGVKKTFVTLHVGAGTFMPVRTDDITNHVMHSEWCDVPQETIDLILATKARGNKVIAVGTTATRALESAAQAHGGKIAAWTGDTQIFIYPGYEFCIVDRLITNFHLPESTLLMLVSALSNRENILAAYEHAVKDRYRFFSYGDAMLIDKLEV.

It belongs to the QueA family. Monomer.

Its subcellular location is the cytoplasm. It catalyses the reaction 7-aminomethyl-7-carbaguanosine(34) in tRNA + S-adenosyl-L-methionine = epoxyqueuosine(34) in tRNA + adenine + L-methionine + 2 H(+). Its pathway is tRNA modification; tRNA-queuosine biosynthesis. Transfers and isomerizes the ribose moiety from AdoMet to the 7-aminomethyl group of 7-deazaguanine (preQ1-tRNA) to give epoxyqueuosine (oQ-tRNA). The protein is S-adenosylmethionine:tRNA ribosyltransferase-isomerase of Acinetobacter baumannii (strain ATCC 17978 / DSM 105126 / CIP 53.77 / LMG 1025 / NCDC KC755 / 5377).